A 279-amino-acid chain; its full sequence is NADPH-dependent 7-cyano-7-deazaguanine reductase (279 aa).

86–88 (VES) provides a ligand contact to substrate. Residue 88 to 89 (SK) participates in NADPH binding. The Thioimide intermediate role is filled by C187. Residue D194 is the Proton donor of the active site. 226-227 (HE) is a binding site for substrate. 255–256 (RG) is a binding site for NADPH.

Belongs to the GTP cyclohydrolase I family. QueF type 2 subfamily. As to quaternary structure, homodimer.

Its subcellular location is the cytoplasm. It catalyses the reaction 7-aminomethyl-7-carbaguanine + 2 NADP(+) = 7-cyano-7-deazaguanine + 2 NADPH + 3 H(+). The protein operates within tRNA modification; tRNA-queuosine biosynthesis. Functionally, catalyzes the NADPH-dependent reduction of 7-cyano-7-deazaguanine (preQ0) to 7-aminomethyl-7-deazaguanine (preQ1). In Actinobacillus succinogenes (strain ATCC 55618 / DSM 22257 / CCUG 43843 / 130Z), this protein is NADPH-dependent 7-cyano-7-deazaguanine reductase.